A 222-amino-acid chain; its full sequence is Phosphatidylinositol phosphate synthase (222 aa).

31-34 serves as a coordination point for a CDP-1,2-diacyl-sn-glycerol; the sequence is DIVT. The next 2 membrane-spanning stretches (helical) occupy residues 32–49 and 55–74; these read IVTL…LTLF and WWGA…DGAM. Residues aspartate 68 and aspartate 71 each coordinate Mg(2+). 3 residues coordinate a CDP-1,2-diacyl-sn-glycerol: glycine 72, arginine 76, and threonine 82. Aspartate 89 and aspartate 93 together coordinate Mg(2+). Catalysis depends on aspartate 93, which acts as the Proton acceptor. 4 helical membrane-spanning segments follow: residues 95-112, 118-136, 156-173, and 179-196; these read LGDG…AFGL, VVAT…YIKA, LVIV…FFPL, and VAMW…LQRV.

It belongs to the CDP-alcohol phosphatidyltransferase class-I family. Homodimer. Mg(2+) serves as cofactor.

The protein localises to the cell membrane. It localises to the secreted. The protein resides in the cell wall. It catalyses the reaction a CDP-1,2-diacyl-sn-glycerol + 1D-myo-inositol 3-phosphate = a 1,2-diacyl-sn-glycero-3-phospho-(1D-myo-inositol-3-phosphate) + CMP + H(+). The enzyme catalyses 1,2-di-(9Z-octadecenoyl)-sn-glycero-3-cytidine-5'-diphosphate + 1D-myo-inositol 3-phosphate = 1,2-di-(9Z-octadecenoyl)-sn-glycero-3-phospho-(1D-myo-inositol-3-phosphate) + CMP + H(+). The catalysed reaction is 1,2-dihexadecanoyl-sn-glycero-3-CDP + 1D-myo-inositol 3-phosphate = 1,2-dihexadecanoyl-sn-glycero-3-phospho-(1D-myo-inositol-3-phosphate) + CMP + H(+). The protein operates within phospholipid metabolism; phosphatidylinositol phosphate biosynthesis. Competitively inhibited by several inositol 1-phosphate analogs, including the phosphonate analog 1-deoxy-1-phosphonomethyl-myo-inositol (Ino-C-P). This leads to inhibition of M.smegmatis growth. Its function is as follows. Catalyzes the conjugation of the 1'-hydroxyl group of D-myo-inositol-3-phosphate (also named L-myo-inositol-1-phosphate) with a lipid tail of cytidine diphosphate diacylglycerol (CDP-DAG), forming phosphatidylinositol phosphate (PIP) and CMP. PIP is a precursor of phosphatidylinositol (PI) which is an essential lipid for mycobacteria required for formation of their cell wall. Is essential to the survival of M.smegmatis. The chain is Phosphatidylinositol phosphate synthase from Mycolicibacterium smegmatis (strain ATCC 700084 / mc(2)155) (Mycobacterium smegmatis).